Reading from the N-terminus, the 343-residue chain is Uroporphyrinogen decarboxylase (343 aa).

Residues 25-29 (RQAGR), phenylalanine 44, aspartate 75, tyrosine 150, serine 205, and histidine 320 contribute to the substrate site.

This sequence belongs to the uroporphyrinogen decarboxylase family. As to quaternary structure, homodimer.

Its subcellular location is the cytoplasm. The enzyme catalyses uroporphyrinogen III + 4 H(+) = coproporphyrinogen III + 4 CO2. Its pathway is porphyrin-containing compound metabolism; protoporphyrin-IX biosynthesis; coproporphyrinogen-III from 5-aminolevulinate: step 4/4. Functionally, catalyzes the decarboxylation of four acetate groups of uroporphyrinogen-III to yield coproporphyrinogen-III. This is Uroporphyrinogen decarboxylase from Mesorhizobium japonicum (strain LMG 29417 / CECT 9101 / MAFF 303099) (Mesorhizobium loti (strain MAFF 303099)).